The sequence spans 364 residues: Homeobox protein Nkx-2.3 (364 aa).

A disordered region spans residues 132 to 153; sequence GDCKAAEESERPKPRSRRKPRV. Over residues 135–144 the composition is skewed to basic and acidic residues; it reads KAAEESERPK. A DNA-binding region (homeobox) is located at residues 148 to 207; it reads RRKPRVLFSQAQVFELERRFKQQRYLSAPEREHLASSLKLTSTQVKIWFQNRRYKCKRQR.

This sequence belongs to the NK-2 homeobox family.

The protein localises to the nucleus. In terms of biological role, transcription factor. This is Homeobox protein Nkx-2.3 (NKX2-3) from Homo sapiens (Human).